The chain runs to 254 residues: Ribonuclease HII (254 aa).

Residues 70 to 254 form the RNase H type-2 domain; the sequence is RYICGIDEVG…ASFIKNLTSC (185 aa). 3 residues coordinate a divalent metal cation: Asp-76, Glu-77, and Asp-168.

It belongs to the RNase HII family. Mn(2+) is required as a cofactor. Requires Mg(2+) as cofactor.

Its subcellular location is the cytoplasm. It carries out the reaction Endonucleolytic cleavage to 5'-phosphomonoester.. Its function is as follows. Endonuclease that specifically degrades the RNA of RNA-DNA hybrids. This Lachnoclostridium phytofermentans (strain ATCC 700394 / DSM 18823 / ISDg) (Clostridium phytofermentans) protein is Ribonuclease HII.